The following is a 1215-amino-acid chain: Cellulose synthase-like protein D4 (1215 aa).

Disordered regions lie at residues 24–46 and 206–231; these read GGDAVVRRGSGLTSPVPRHSLGS and SDTDESDSVTDDDDDEAVSSSEERDQ. A compositionally biased stretch (acidic residues) spans 207–222; it reads DTDESDSVTDDDDDEA. 2 helical membrane passes run 321–341 and 352–372; these read AILSPYRLLIAIRLVALGFFL and AVWLWAMSVACEVWFAFSWLL. Catalysis depends on residues Asp452 and Asp905. The next 6 helical transmembrane spans lie at 988–1008, 1014–1034, 1060–1080, 1114–1134, 1147–1167, and 1177–1197; these read VFLLAYCLLPAVSLFSGKFIV, TFLAFLLVITLTLCLLALLEI, PAAVLQGLLKVIAGVDISFTL, LMVPPVTIMMVNAVAIAVAAA, LLGGAFFSFWVLCHLYPFAKG, and TIVFVWSGLISMIISLLWVYI.

The protein belongs to the glycosyltransferase 2 family. Plant cellulose synthase-like D subfamily.

Its subcellular location is the golgi apparatus membrane. Functionally, thought to be a Golgi-localized beta-glycan synthase that polymerize the backbones of noncellulosic polysaccharides (hemicelluloses) of plant cell wall. This is Cellulose synthase-like protein D4 (CSLD4) from Oryza sativa subsp. japonica (Rice).